A 119-amino-acid polypeptide reads, in one-letter code: uncharacterized protein (119 aa).

Cysteine 13 is a catalytic residue.

It belongs to the ArsC family.

This is an uncharacterized protein from Escherichia coli (strain K12).